Here is a 632-residue protein sequence, read N- to C-terminus: Nucleoside triphosphatase I (632 aa).

The Helicase ATP-binding domain maps to 42-204 (FLGLDKMHSL…IMLVNLLRPK (163 aa)). 55-62 (HETGVGKT) contacts ATP. Positions 141-144 (DECH) match the DEXH box motif. The Helicase C-terminal domain occupies 367–532 (KFTDVCLRIL…EFTQLFKVFK (166 aa)). Residues 457 to 524 (DIFILDMTWN…DIIRNKSKEF (68 aa)) are binding to the cap-specific mRNA (nucleoside-2'-O-)-methyltransferase.

Belongs to the helicase family. NPH I subfamily. Monomer. Interacts (via C-terminus) with RAP94 (via N-terminus). Interacts with the cap-specific mRNA (nucleoside-2'-O-)-methyltransferase.

It is found in the virion. The catalysed reaction is a ribonucleoside 5'-triphosphate + H2O = a ribonucleoside 5'-diphosphate + phosphate + H(+). Functionally, DNA-dependent ATPase required for providing the needed energy to achieve the termination of early transcripts. Acts in concert with the RAP94 subunit of the virion RNA polymerase and the capping enzyme/VTF to catalyze release of UUUUUNU-containing nascent RNA from the elongation complex. NPH-I must bind ssDNA in order to exhibit ATPase activity. This Rabbit fibroma virus (strain Kasza) (RFV) protein is Nucleoside triphosphatase I (NPH1).